The chain runs to 150 residues: Urease accessory protein UreE (150 aa).

The protein belongs to the UreE family.

Its subcellular location is the cytoplasm. In terms of biological role, involved in urease metallocenter assembly. Binds nickel. Probably functions as a nickel donor during metallocenter assembly. In Staphylococcus carnosus (strain TM300), this protein is Urease accessory protein UreE.